The following is a 761-amino-acid chain: Phosphoribosylformylglycinamidine synthase subunit PurL (761 aa).

Residue histidine 58 is part of the active site. Positions 61 and 105 each coordinate ATP. Glutamate 107 contacts Mg(2+). Residues 108–111 (SHNH) and arginine 130 contribute to the substrate site. Histidine 109 functions as the Proton acceptor in the catalytic mechanism. Aspartate 131 provides a ligand contact to Mg(2+). Residue glutamine 259 coordinates substrate. Aspartate 287 contacts Mg(2+). 331–333 (ESQ) serves as a coordination point for substrate. Asparagine 519 and glycine 556 together coordinate ATP. Asparagine 557 provides a ligand contact to Mg(2+). Serine 559 provides a ligand contact to substrate.

It belongs to the FGAMS family. As to quaternary structure, monomer. Part of the FGAM synthase complex composed of 1 PurL, 1 PurQ and 2 PurS subunits.

The protein localises to the cytoplasm. The catalysed reaction is N(2)-formyl-N(1)-(5-phospho-beta-D-ribosyl)glycinamide + L-glutamine + ATP + H2O = 2-formamido-N(1)-(5-O-phospho-beta-D-ribosyl)acetamidine + L-glutamate + ADP + phosphate + H(+). It functions in the pathway purine metabolism; IMP biosynthesis via de novo pathway; 5-amino-1-(5-phospho-D-ribosyl)imidazole from N(2)-formyl-N(1)-(5-phospho-D-ribosyl)glycinamide: step 1/2. Functionally, part of the phosphoribosylformylglycinamidine synthase complex involved in the purines biosynthetic pathway. Catalyzes the ATP-dependent conversion of formylglycinamide ribonucleotide (FGAR) and glutamine to yield formylglycinamidine ribonucleotide (FGAM) and glutamate. The FGAM synthase complex is composed of three subunits. PurQ produces an ammonia molecule by converting glutamine to glutamate. PurL transfers the ammonia molecule to FGAR to form FGAM in an ATP-dependent manner. PurS interacts with PurQ and PurL and is thought to assist in the transfer of the ammonia molecule from PurQ to PurL. The chain is Phosphoribosylformylglycinamidine synthase subunit PurL from Rhodococcus opacus (strain B4).